Consider the following 252-residue polypeptide: dITP/XTP pyrophosphatase (252 aa).

7-12 (THNEGK) serves as a coordination point for substrate. The active-site Proton acceptor is the Asp74. A Mg(2+)-binding site is contributed by Asp74. Residues Ser75 and 193–196 (FGYD) contribute to the substrate site. A disordered region spans residues 202 to 229 (DDQPAGRVSTEPDHEGEPLTSAEMTPAE). Residues Lys230 and 235–236 (HR) contribute to the substrate site.

The protein belongs to the HAM1 NTPase family. As to quaternary structure, homodimer. Mg(2+) serves as cofactor.

It catalyses the reaction XTP + H2O = XMP + diphosphate + H(+). The catalysed reaction is dITP + H2O = dIMP + diphosphate + H(+). The enzyme catalyses ITP + H2O = IMP + diphosphate + H(+). Functionally, pyrophosphatase that catalyzes the hydrolysis of nucleoside triphosphates to their monophosphate derivatives, with a high preference for the non-canonical purine nucleotides XTP (xanthosine triphosphate), dITP (deoxyinosine triphosphate) and ITP. Seems to function as a house-cleaning enzyme that removes non-canonical purine nucleotides from the nucleotide pool, thus preventing their incorporation into DNA/RNA and avoiding chromosomal lesions. In Bifidobacterium longum (strain DJO10A), this protein is dITP/XTP pyrophosphatase.